A 351-amino-acid chain; its full sequence is LIM/homeobox protein ceh-14 (351 aa).

2 consecutive LIM zinc-binding domains span residues 46-105 and 105-169; these read AICS…KFGT and TKCS…ARDK. A DNA-binding region (homeobox) is located at residues 180-239; that stretch reads NKRPRTTISAKSLETLKQAYQTSSKPARHVREQLASETGLDMRVVQVWFQNRRAKEKRLK. Over residues 238 to 254 the composition is skewed to basic and acidic residues; sequence LKKDAGRRWKSSNRAES. Positions 238 to 268 are disordered; that stretch reads LKKDAGRRWKSSNRAESDSNSPIESINGQSP. Residues 255 to 268 show a composition bias toward polar residues; that stretch reads DSNSPIESINGQSP.

In terms of assembly, interacts (via LIM zinc-binding domains 1 and 2) with lim-7 (via LID domain). May interact with itself. May interact with homeobox protein ceh-63. In terms of tissue distribution, expressed in the anterior AFDL/R sensory neurons and BDUL/R and ALA interneurons, and in PVT, PVQL/R, DVC, PVNL/R, PVWL/R, PVR, PHCL/R, PHAL/R and PHBL/R cells in the tail region.

Its subcellular location is the nucleus. In terms of biological role, probable transcription factor, modulating expression of helix-loop-helix protein mbr-1 and homeobox protein ceh-63, perhaps acting in concert with ceh-63. Binds to a motif including the sequence 5'-CTAAT-3' in regulatory promoter elements. Confers thermosensory function to neurons. Required for correct AFD-mediated thermotaxis. In concert with homeobox protein ttx-1, perhaps as components in a complex, specifies identity of AFD neurons, acting by synergistically regulating receptor-type guanylyl cyclase gcy-8, gcy-18 and other genes. Involved in postembryonic differentiation of the ALA neuron, and regulation of genes that contribute to behavioral quiescence, a sleep-like behavior mediated by ALA. Regulates its own expression and also that of homeodomain ceh-17, together forming an autoregulatory loop in the ALA neuron. Required for initial pathfinding of the ALA axons, but largely dispensable for axon migration. Involved in regulating postembryonic axon maintenance in the ventral nerve cord, acting in concert with LIM homeobox protein lim-6, via modulation of expression of immunoglobulin domain zig genes in the interneuron PVT. Plays a role in controlling the peptidergic identity of the BDU neurons, regulating expression of flp-10, nlp-1, and nlp-15, thereby modulating the harsh touch response. This is LIM/homeobox protein ceh-14 (ceh-14) from Caenorhabditis elegans.